The sequence spans 169 residues: MSSIQKKCLICCNIGEEELLQACDCPSRVHHTCLQSHIQCFKSSHCTFCEKKYKIMVMCNSLKKCSSPVLEQANWIVLCVCVSTLLCILCILLDICLTIRLWQSSVLCYEVYNTFYFLVLCGTFSIAFYLAAWYDIFFEFHSLCSFIWNLKKISQSYPCEASKNALKIL.

This is an uncharacterized protein from Saimiriine herpesvirus 2 (strain 11) (SaHV-2).